We begin with the raw amino-acid sequence, 327 residues long: GMP reductase (327 aa).

Cysteine 175 serves as the catalytic Thioimidate intermediate. Residue 204–227 (IIADGGIRTNGDVAKSIRFGATMV) coordinates NADP(+).

Belongs to the IMPDH/GMPR family. GuaC type 2 subfamily.

It carries out the reaction IMP + NH4(+) + NADP(+) = GMP + NADPH + 2 H(+). Functionally, catalyzes the irreversible NADPH-dependent deamination of GMP to IMP. It functions in the conversion of nucleobase, nucleoside and nucleotide derivatives of G to A nucleotides, and in maintaining the intracellular balance of A and G nucleotides. In Bacillus anthracis, this protein is GMP reductase.